A 382-amino-acid chain; its full sequence is Galactokinase (382 aa).

Position 34–37 (34–37 (EHTD)) interacts with substrate. Position 124–130 (124–130 (GAGLSSS)) interacts with ATP. Residues Ser-130 and Glu-162 each contribute to the Mg(2+) site. The active-site Proton acceptor is the Asp-174. Tyr-223 is a substrate binding site.

Belongs to the GHMP kinase family. GalK subfamily.

It is found in the cytoplasm. It catalyses the reaction alpha-D-galactose + ATP = alpha-D-galactose 1-phosphate + ADP + H(+). Its pathway is carbohydrate metabolism; galactose metabolism. Its function is as follows. Catalyzes the transfer of the gamma-phosphate of ATP to D-galactose to form alpha-D-galactose-1-phosphate (Gal-1-P). The chain is Galactokinase from Shigella boydii serotype 18 (strain CDC 3083-94 / BS512).